Reading from the N-terminus, the 353-residue chain is Photosystem II D2 protein (353 aa).

T2 is subject to N-acetylthreonine. T2 bears the Phosphothreonine mark. Residues C41–T61 form a helical membrane-spanning segment. H118 serves as a coordination point for chlorophyll a. Residues G125–P141 traverse the membrane as a helical segment. Residues Q130 and N143 each coordinate pheophytin a. Residues V153–S166 form a helical membrane-spanning segment. H198 contributes to the chlorophyll a binding site. A helical transmembrane segment spans residues A208–D228. Positions 215 and 262 each coordinate a plastoquinone. H215 serves as a coordination point for Fe cation. H269 provides a ligand contact to Fe cation. The helical transmembrane segment at G279–R295 threads the bilayer.

This sequence belongs to the reaction center PufL/M/PsbA/D family. As to quaternary structure, PSII is composed of 1 copy each of membrane proteins PsbA, PsbB, PsbC, PsbD, PsbE, PsbF, PsbH, PsbI, PsbJ, PsbK, PsbL, PsbM, PsbT, PsbX, PsbY, PsbZ, Psb30/Ycf12, at least 3 peripheral proteins of the oxygen-evolving complex and a large number of cofactors. It forms dimeric complexes. The cofactor is The D1/D2 heterodimer binds P680, chlorophylls that are the primary electron donor of PSII, and subsequent electron acceptors. It shares a non-heme iron and each subunit binds pheophytin, quinone, additional chlorophylls, carotenoids and lipids. There is also a Cl(-1) ion associated with D1 and D2, which is required for oxygen evolution. The PSII complex binds additional chlorophylls, carotenoids and specific lipids..

The protein resides in the plastid. It is found in the chloroplast thylakoid membrane. It catalyses the reaction 2 a plastoquinone + 4 hnu + 2 H2O = 2 a plastoquinol + O2. Its function is as follows. Photosystem II (PSII) is a light-driven water:plastoquinone oxidoreductase that uses light energy to abstract electrons from H(2)O, generating O(2) and a proton gradient subsequently used for ATP formation. It consists of a core antenna complex that captures photons, and an electron transfer chain that converts photonic excitation into a charge separation. The D1/D2 (PsbA/PsbD) reaction center heterodimer binds P680, the primary electron donor of PSII as well as several subsequent electron acceptors. D2 is needed for assembly of a stable PSII complex. This chain is Photosystem II D2 protein, found in Phaseolus vulgaris (Kidney bean).